The primary structure comprises 431 residues: Histidinol dehydrogenase 1 (431 aa).

Positions 127, 188, and 211 each coordinate NAD(+). 3 residues coordinate substrate: serine 234, glutamine 256, and histidine 259. Zn(2+) is bound by residues glutamine 256 and histidine 259. Residues glutamate 324 and histidine 325 each act as proton acceptor in the active site. Substrate is bound by residues histidine 325, aspartate 358, glutamate 412, and histidine 417. Aspartate 358 contributes to the Zn(2+) binding site. Position 417 (histidine 417) interacts with Zn(2+).

This sequence belongs to the histidinol dehydrogenase family. Zn(2+) is required as a cofactor.

The catalysed reaction is L-histidinol + 2 NAD(+) + H2O = L-histidine + 2 NADH + 3 H(+). Its pathway is amino-acid biosynthesis; L-histidine biosynthesis; L-histidine from 5-phospho-alpha-D-ribose 1-diphosphate: step 9/9. Its function is as follows. Catalyzes the sequential NAD-dependent oxidations of L-histidinol to L-histidinaldehyde and then to L-histidine. The protein is Histidinol dehydrogenase 1 of Trichormus variabilis (strain ATCC 29413 / PCC 7937) (Anabaena variabilis).